The sequence spans 73 residues: UPF0154 protein MG335.1 (73 aa).

The chain crosses the membrane as a helical span at residues Leu6 to Ile26.

The protein belongs to the UPF0154 family.

It is found in the membrane. This is UPF0154 protein MG335.1 from Mycoplasma genitalium (strain ATCC 33530 / DSM 19775 / NCTC 10195 / G37) (Mycoplasmoides genitalium).